We begin with the raw amino-acid sequence, 137 residues long: Partner of bursicon (137 aa).

The N-terminal stretch at 1–24 is a signal peptide; sequence MNIMITKIFFLVQLFYIVVSKSSA. Cystine bridges form between Cys28–Cys86, Cys52–Cys101, Cys61–Cys127, Cys65–Cys129, and Cys83–Cys132. The CTCK domain maps to 28–123; the sequence is CETVASEVHV…NALMEVRLRE (96 aa).

Heterodimer of burs and pburs.

The protein localises to the secreted. In terms of biological role, final heterodimeric neurohormone released at the end of the molting cycle, involved in the sclerotization (tanning) of the insect cuticle, melanization and wing spreading. The sequence is that of Partner of bursicon from Bombyx mori (Silk moth).